Consider the following 88-residue polypeptide: Large ribosomal subunit protein bL27 (88 aa).

Residues 1–21 form a disordered region; that stretch reads MAHKKGASSSRNGRDSNAKRL.

It belongs to the bacterial ribosomal protein bL27 family.

This Thermobifida fusca (strain YX) protein is Large ribosomal subunit protein bL27.